The chain runs to 198 residues: Integrator complex subunit 8-like protein (198 aa).

It belongs to the Integrator subunit 8 family. Component of the Integrator complex. The core complex associates with protein phosphatase 2A subunits, to form the Integrator-PP2A (INTAC) complex.

The protein localises to the nucleus. Its subcellular location is the chromosome. Its function is as follows. Component of the integrator complex, a multiprotein complex that terminates RNA polymerase II (Pol II) transcription in the promoter-proximal region of genes. The integrator complex provides a quality checkpoint during transcription elongation by driving premature transcription termination of transcripts that are unfavorably configured for transcriptional elongation: the complex terminates transcription by (1) catalyzing dephosphorylation of the C-terminal domain (CTD) of Pol II subunit polr2a, (2) degrading the exiting nascent RNA transcript via endonuclease activity and (3) promoting the release of Pol II from bound DNA. The integrator complex is also involved in terminating the synthesis of non-coding Pol II transcripts, such as enhancer RNAs (eRNAs), small nuclear RNAs (snRNAs), telomerase RNAs and long non-coding RNAs (lncRNAs). Within the integrator complex, INTS8 is required for the recruitment of protein phosphatase 2A (PP2A) to transcription pause-release checkpoint. This chain is Integrator complex subunit 8-like protein, found in Dictyostelium discoideum (Social amoeba).